A 207-amino-acid chain; its full sequence is Large ribosomal subunit protein uL4 (207 aa).

The tract at residues 55–75 is disordered; the sequence is SAVRGGGRKPWRQKGTGRARQ. Residues 60–71 show a composition bias toward basic residues; that stretch reads GGRKPWRQKGTG.

The protein belongs to the universal ribosomal protein uL4 family. As to quaternary structure, part of the 50S ribosomal subunit.

One of the primary rRNA binding proteins, this protein initially binds near the 5'-end of the 23S rRNA. It is important during the early stages of 50S assembly. It makes multiple contacts with different domains of the 23S rRNA in the assembled 50S subunit and ribosome. In terms of biological role, forms part of the polypeptide exit tunnel. In Staphylococcus epidermidis (strain ATCC 35984 / DSM 28319 / BCRC 17069 / CCUG 31568 / BM 3577 / RP62A), this protein is Large ribosomal subunit protein uL4.